A 625-amino-acid chain; its full sequence is MSVHGRFPASPPISLSPSSSSTSPSSQSPSTPPDLKQRVIACLNKLADRDTLALASAELDSIARNLTHDSFSPFLNCIHNTDSSVKSPVRKQCVALLSVLSRYHGDSLTPHLAKMVSTVIRRLRDPDSSVRSACAVATADMSAHVTRQPFASVAKPLIETLIQEGDSNLQIGAALCLAASVDAATDPESEQLRKSLPKIGKLLKSDGFKAKAALLSAVGSIITAGGAGTKPVLDWLVPVLIEFLSSEDWAARKSAAEALGKVATAEDLASQYKKTCTTALESRRFDKVKSVRETMNRALNLWKEVSTDDEASLSPSRSSTDDGNIGCFSSVTRSSTIDVGLKSARPKKVTPIMKRSPSLPVNRSYAATRQKENLPKRNQGNMTMLVEEASSVDNKGPHFTPVKKSSEETEEKANSGGPDIIKHTISEKSREDSKVSSFGGLRSGSRVAPCSDDGDSVKNCKDDVEESKKDSEELSLIREQLALIENQQSSLLDLLQKFMGTSQSGIQSLESRVSGLEMALDEISCDLAVSNGRVPRNSSGCAGDSCSKLPGTEFLSPKFWRKTEERPRNRNTANEMAAYDQGMRESTDTNNGQRGGSVFQKRSRRDQFQDCMHTTLQKPTTRLST.

Residues 1–34 form a disordered region; sequence MSVHGRFPASPPISLSPSSSSTSPSSQSPSTPPD. Residues 12–29 show a composition bias toward low complexity; the sequence is PISLSPSSSSTSPSSQSP. 5 HEAT repeats span residues 69 to 106, 110 to 147, 149 to 186, 190 to 227, and 230 to 268; these read DSFS…YHGD, PHLA…HVTR, PFAS…AATD, EQLR…AGGA, and KPVL…AEDL. The tract at residues 391 to 466 is disordered; that stretch reads SVDNKGPHFT…VKNCKDDVEE (76 aa). 3 stretches are compositionally biased toward basic and acidic residues: residues 404–413, 420–434, and 455–466; these read KSSEETEEKA, IIKH…EDSK, and DSVKNCKDDVEE. The residue at position 475 (Ser475) is a Phosphoserine. The disordered stretch occupies residues 582 to 625; it reads GMRESTDTNNGQRGGSVFQKRSRRDQFQDCMHTTLQKPTTRLST. Residues 612–625 are compositionally biased toward polar residues; it reads MHTTLQKPTTRLST.

This chain is TORTIFOLIA1-like protein 4, found in Arabidopsis thaliana (Mouse-ear cress).